A 530-amino-acid chain; its full sequence is Portal protein B (530 aa).

It belongs to the siphoviridae portal protein family. Homododecamer. Interacts with the terminase complex composed of two small and one large terminase subunits. Post-translationally, proteolytically cleaved by the viral protease during capsid maturation.

The protein localises to the virion. In terms of biological role, forms the portal vertex of the capsid. This portal plays critical roles in head assembly, genome packaging, neck/tail attachment, and genome ejection. The portal protein multimerizes as a single ring-shaped homododecamer arranged around a central channel. Binds to the terminase subunits to form the packaging machine. The protein is Portal protein B of Enterobacteria phage P21 (Bacteriophage 21).